We begin with the raw amino-acid sequence, 220 residues long: Riboflavin kinase (220 aa).

Residues 1-92 (METDDQYYRA…LSRILAIKNN (92 aa)) form an H-T-H motif-like region. Positions 93 to 220 (VVITGTVTSG…GDRVSVEVYT (128 aa)) are riboflavin kinase. 102-107 (GMGEGR) contributes to the CDP binding site. Residues threonine 131 and asparagine 133 each contribute to the Mg(2+) site. FMN-binding residues include threonine 188 and glutamate 195. Residue 200–203 (KYLR) participates in CDP binding.

The protein belongs to the archaeal riboflavin kinase family. Requires Mg(2+) as cofactor.

The catalysed reaction is riboflavin + CTP = CDP + FMN + H(+). Its pathway is cofactor biosynthesis; FMN biosynthesis; FMN from riboflavin (CTP route): step 1/1. Functionally, catalyzes the CTP-dependent phosphorylation of riboflavin (vitamin B2) to form flavin mononucleotide (FMN). This chain is Riboflavin kinase (ribK), found in Thermoplasma acidophilum (strain ATCC 25905 / DSM 1728 / JCM 9062 / NBRC 15155 / AMRC-C165).